The sequence spans 159 residues: Eukaryotic translation initiation factor 5A (159 aa).

Residues 1–12 (MSDEEHQFESKA) show a composition bias toward basic and acidic residues. The tract at residues 1–23 (MSDEEHQFESKADAGASKTYPQQ) is disordered. K52 carries the hypusine modification.

It belongs to the eIF-5A family. Lys-52 undergoes hypusination, a unique post-translational modification that consists in the addition of a butylamino group from spermidine to lysine side chain, leading to the formation of the unusual amino acid hypusine. eIF-5As are the only known proteins to undergo this modification, which is essential for their function.

Its function is as follows. Translation factor that promotes translation elongation and termination, particularly upon ribosome stalling at specific amino acid sequence contexts. Binds between the exit (E) and peptidyl (P) site of the ribosome and promotes rescue of stalled ribosome: specifically required for efficient translation of polyproline-containing peptides as well as other motifs that stall the ribosome. Acts as a ribosome quality control (RQC) cofactor by joining the RQC complex to facilitate peptidyl transfer during CAT tailing step. This is Eukaryotic translation initiation factor 5A (EIFSV1) from Senecio vernalis (Spring groundsel).